Consider the following 122-residue polypeptide: Large ribosomal subunit protein bL12 (122 aa).

Belongs to the bacterial ribosomal protein bL12 family. As to quaternary structure, homodimer. Part of the ribosomal stalk of the 50S ribosomal subunit. Forms a multimeric L10(L12)X complex, where L10 forms an elongated spine to which 2 to 4 L12 dimers bind in a sequential fashion. Binds GTP-bound translation factors.

Functionally, forms part of the ribosomal stalk which helps the ribosome interact with GTP-bound translation factors. Is thus essential for accurate translation. This is Large ribosomal subunit protein bL12 from Pasteurella multocida (strain Pm70).